Consider the following 278-residue polypeptide: RsbT co-antagonist protein RsbRD (278 aa).

Residues 160–271 enclose the STAS domain; sequence SAPIMPITDG…QSLAKALANK (112 aa). Thr181 bears the Phosphothreonine mark.

In terms of assembly, probably present in the stressosome with RsbRA, RsbRB, RsbRC and RsbS. Phosphorylated by RsbT.

Functionally, one of 4 functionally non-identical RsbR paralogs, it functions in the environmental signaling branch of the general stress response. In terms of biological role, negative regulator of sigma-B activity. Non-phosphorylated RsbS binds to RsbT, preventing its association with RsbU. Requires any one of RsbRA, RsbRB, RsbRC or RsbRD to sequester RsbT. When RsbS and the RsbR paralog(s) are phosphorylated, they release RsbT, which can then bind and activate RsbU. The chain is RsbT co-antagonist protein RsbRD (rsbRD) from Bacillus subtilis (strain 168).